The sequence spans 595 residues: Sulfite reductase [NADPH] flavoprotein alpha-component (595 aa).

Residues 59 to 197 form the Flavodoxin-like domain; the sequence is ITVLSASQTG…KADIWRREIV (139 aa). FMN-binding positions include 65 to 70, 112 to 115, and 148 to 157; these read SQTGNA, STQG, and LGDSSYTYFA. The FAD-binding FR-type domain maps to 230-444; that stretch reads EEPFTAHLVV…IEHNDNFRLP (215 aa). FAD is bound by residues Thr318, Phe352, 382 to 385, 400 to 402, Tyr406, and 415 to 418; these read RLYS, TVS, and GGAS. NADP(+) is bound by residues 515 to 516, 521 to 525, and Asp557; these read SQ and KIYVQ. Residue Tyr595 coordinates FAD.

The protein belongs to the NADPH-dependent sulphite reductase flavoprotein subunit CysJ family. In the N-terminal section; belongs to the flavodoxin family. It in the C-terminal section; belongs to the flavoprotein pyridine nucleotide cytochrome reductase family. Alpha(8)-beta(8). The alpha component is a flavoprotein, the beta component is a hemoprotein. The cofactor is FAD. FMN is required as a cofactor.

The catalysed reaction is hydrogen sulfide + 3 NADP(+) + 3 H2O = sulfite + 3 NADPH + 4 H(+). Its pathway is sulfur metabolism; hydrogen sulfide biosynthesis; hydrogen sulfide from sulfite (NADPH route): step 1/1. Component of the sulfite reductase complex that catalyzes the 6-electron reduction of sulfite to sulfide. This is one of several activities required for the biosynthesis of L-cysteine from sulfate. The flavoprotein component catalyzes the electron flow from NADPH -&gt; FAD -&gt; FMN to the hemoprotein component. This is Sulfite reductase [NADPH] flavoprotein alpha-component from Baumannia cicadellinicola subsp. Homalodisca coagulata.